We begin with the raw amino-acid sequence, 66 residues long: Large ribosomal subunit protein bL35 (66 aa).

Over residues 1-16 (MPKQKTHRASAKRFKR) the composition is skewed to basic residues. The disordered stretch occupies residues 1 to 21 (MPKQKTHRASAKRFKRTGSGG).

It belongs to the bacterial ribosomal protein bL35 family.

The protein is Large ribosomal subunit protein bL35 of Streptococcus gordonii (strain Challis / ATCC 35105 / BCRC 15272 / CH1 / DL1 / V288).